The primary structure comprises 394 residues: Phosphopentomutase (394 aa).

Residues Asp-14, Asp-287, His-292, Asp-328, His-329, and His-340 each contribute to the Mn(2+) site.

It belongs to the phosphopentomutase family. Mn(2+) serves as cofactor.

It is found in the cytoplasm. It catalyses the reaction 2-deoxy-alpha-D-ribose 1-phosphate = 2-deoxy-D-ribose 5-phosphate. The enzyme catalyses alpha-D-ribose 1-phosphate = D-ribose 5-phosphate. It functions in the pathway carbohydrate degradation; 2-deoxy-D-ribose 1-phosphate degradation; D-glyceraldehyde 3-phosphate and acetaldehyde from 2-deoxy-alpha-D-ribose 1-phosphate: step 1/2. Isomerase that catalyzes the conversion of deoxy-ribose 1-phosphate (dRib-1-P) and ribose 1-phosphate (Rib-1-P) to deoxy-ribose 5-phosphate (dRib-5-P) and ribose 5-phosphate (Rib-5-P), respectively. The protein is Phosphopentomutase of Listeria monocytogenes serotype 4b (strain CLIP80459).